The sequence spans 85 residues: Large ribosomal subunit protein bL27 (85 aa).

Residues 1-10 (MAQKKGGGST) show a composition bias toward gly residues. The interval 1–20 (MAQKKGGGSTRNGRDSQPKM) is disordered.

The protein belongs to the bacterial ribosomal protein bL27 family.

This chain is Large ribosomal subunit protein bL27, found in Methylibium petroleiphilum (strain ATCC BAA-1232 / LMG 22953 / PM1).